A 745-amino-acid polypeptide reads, in one-letter code: Ankyrin repeat and protein kinase domain-containing protein 1 (745 aa).

The region spanning 34–301 (EEEWHLVASG…NVAVETDMLL (268 aa)) is the Protein kinase domain. Residues 40–48 (VASGGFSKV) and lysine 63 each bind ATP. Aspartate 157 serves as the catalytic Proton acceptor. 11 ANK repeats span residues 369 to 398 (NRVTPLHFLVAGGSLEQVRLLLSHDVDVDC), 402 to 431 (SGYTPLLIATQDQQPDLCALLLAHGADTNL), 435 to 464 (DGWAPLHFAAQNGDDHTARLLLDHGALVNA), 468 to 497 (EGWTPLHLAAQNNFENVARLLVSRQADLSP), 501 to 530 (EGKTPLHVAAYFGHIGLVKLLSGQGAELDA), 534 to 563 (NLRTPLHLAVERGKVRAIQHLLKCGALPDA), 567 to 596 (SGYSPLHIAAARGKDLIFKMLLRYGASLEL), 600 to 629 (QGWTPLHLATYKGHLEIIHQLAKSHVDLDA), 633 to 662 (MQWTPLHLAAFQGEEGVMLALLQCGANPNA), 666 to 695 (SGWTPLHLAVHKGTFLGITHLLEYGADIHA), and 699 to 728 (VGWTPAHLAALKGNTAILKVLVKAAAQVDV).

This sequence belongs to the protein kinase superfamily. TKL Ser/Thr protein kinase family.

The catalysed reaction is L-seryl-[protein] + ATP = O-phospho-L-seryl-[protein] + ADP + H(+). It catalyses the reaction L-threonyl-[protein] + ATP = O-phospho-L-threonyl-[protein] + ADP + H(+). This chain is Ankyrin repeat and protein kinase domain-containing protein 1 (Ankk1), found in Mus musculus (Mouse).